We begin with the raw amino-acid sequence, 43 residues long: Augerpeptide hhe9.2 (43 aa).

Residues 2–40 (EEVGCFPNVCKNDGNCSIETSTGMTRCQCLEGYTGHVCE) form the EGF-like domain. 3 disulfides stabilise this stretch: cysteine 6/cysteine 28, cysteine 11/cysteine 30, and cysteine 17/cysteine 39.

As to expression, expressed by the venom duct.

The protein resides in the secreted. The protein is Augerpeptide hhe9.2 of Hastula hectica (Sea snail).